The primary structure comprises 449 residues: Neurexin-1a-beta (449 aa).

A signal peptide spans 1–38 (MLRLWPGGAPGGLASILLRISLRLALWLPPLTLGSALA). Residues 39-373 (EGPGELYVPQ…EVIRESSSTT (335 aa)) lie on the Extracellular side of the membrane. Residues 71 to 272 (TTYIFGRDGG…DPNVRVEGSA (202 aa)) enclose the Laminin G-like domain. Positions 276–366 (GDMPSSSITP…AKGYPSPEVI (91 aa)) are disordered. The span at 280-311 (SSSITPQSSVSAAGNRSETSPSITDITTTTAS) shows a compositional bias: low complexity. A compositionally biased stretch (polar residues) spans 312 to 322 (NRQGKQTTTPQ). A helical transmembrane segment spans residues 374-394 (GMVVGIVAAAALCILILLYAM). Residues 395 to 449 (YKYRNRDEGSYHVDESRNYISNSATQPNGAAVKEKPIGVPKNKKDKKNKDKEYYV) are Cytoplasmic-facing. The disordered stretch occupies residues 415 to 449 (SNSATQPNGAAVKEKPIGVPKNKKDKKNKDKEYYV).

It belongs to the neurexin family.

The protein localises to the membrane. Functionally, neuronal cell surface protein that may be involved in cell recognition and cell adhesion. May play a role in formation or maintenance of synaptic junctions. The protein is Neurexin-1a-beta (nrxn1a) of Danio rerio (Zebrafish).